The chain runs to 161 residues: MGAKDYIGSLFLKELVKGMALTGRHFFARKITVQFPEEKTPQSARFRGLHALRRYPNGEERCIACKLCEAICPAMAITIESEQREDGSRRTSRYDIDLTKCIFCGFCEEACPVDAVVETRVFEYHGEQRGDLYYTKQMLLAVGDRHEQQIAADREQEAKFR.

2 4Fe-4S ferredoxin-type domains span residues 52–82 (LRRY…IESE) and 92–121 (SRYD…ETRV). [4Fe-4S] cluster is bound by residues cysteine 62, cysteine 65, cysteine 68, cysteine 72, cysteine 101, cysteine 104, cysteine 107, and cysteine 111.

It belongs to the complex I 23 kDa subunit family. In terms of assembly, NDH-1 is composed of 14 different subunits. Subunits NuoA, H, J, K, L, M, N constitute the membrane sector of the complex. The cofactor is [4Fe-4S] cluster.

The protein localises to the cell inner membrane. The catalysed reaction is a quinone + NADH + 5 H(+)(in) = a quinol + NAD(+) + 4 H(+)(out). Its function is as follows. NDH-1 shuttles electrons from NADH, via FMN and iron-sulfur (Fe-S) centers, to quinones in the respiratory chain. The immediate electron acceptor for the enzyme in this species is believed to be ubiquinone. Couples the redox reaction to proton translocation (for every two electrons transferred, four hydrogen ions are translocated across the cytoplasmic membrane), and thus conserves the redox energy in a proton gradient. The polypeptide is NADH-quinone oxidoreductase subunit I (Azoarcus sp. (strain BH72)).